The sequence spans 427 residues: Transcription factor MYB98 (427 aa).

The Nuclear localization signal 1 signature appears at 195–202; the sequence is TRKLSSSS. 2 consecutive HTH myb-type domains span residues 212-267 and 268-318; these read KSTL…RPDI and KKET…RRQF. 2 DNA-binding regions (H-T-H motif) span residues 240-263 and 291-314; these read WSHIAQVLPGRIGKQCRERWHNHL and WAEIAKRLPGRTENSIKNHWNATK. A Nuclear localization signal 2 motif is present at residues 361–368; sequence NKKKDVVV.

In terms of tissue distribution, expressed at high levels in the synergid cells of the female gametophyte, and at lower levels in the endosperm of young seeds and the trichomes of young leaves and sepals.

The protein resides in the nucleus. In terms of biological role, transcription factor that binds to the motif 5'-GTAACNT-3' in the promoter of target genes (e.g. DD11 and DD18) and promotes their expression within synergid cells (e.g. in the filiform apparatus) in ovules. Required for the formation of the filiform apparatus during synergid cell differentiation in the female gametophyte. Involved in pollen tube guidance to the micropyle. The chain is Transcription factor MYB98 from Arabidopsis thaliana (Mouse-ear cress).